Here is a 637-residue protein sequence, read N- to C-terminus: Nuclear receptor subfamily 2 group C member 1-A (637 aa).

The segment at residues 149–224 is a DNA-binding region (nuclear receptor); it reads VELCVVCGDK…LGMKQDSVQC (76 aa). 2 consecutive NR C4-type zinc fingers follow at residues 152-172 and 188-207; these read CVVC…CEGC and CRGS…CQYC. Residues 383–624 form the NR LBD domain; that stretch reads CLGSNANLLH…SIIPYILRME (242 aa).

This sequence belongs to the nuclear hormone receptor family. NR2 subfamily.

The protein localises to the nucleus. Orphan nuclear receptor. Binds the IR7 element in the promoter of its own gene in an autoregulatory negative feedback mechanism. Primarily repressor of a broad range of genes. Binds to hormone response elements (HREs) consisting of two 5'-AGGTCA-3' half site direct repeat consensus sequences. The polypeptide is Nuclear receptor subfamily 2 group C member 1-A (nr2c1-a) (Xenopus laevis (African clawed frog)).